The following is a 124-amino-acid chain: Small ribosomal subunit protein uS12 (124 aa).

At Asp-89 the chain carries 3-methylthioaspartic acid.

The protein belongs to the universal ribosomal protein uS12 family. In terms of assembly, part of the 30S ribosomal subunit. Contacts proteins S8 and S17. May interact with IF1 in the 30S initiation complex.

In terms of biological role, with S4 and S5 plays an important role in translational accuracy. Functionally, interacts with and stabilizes bases of the 16S rRNA that are involved in tRNA selection in the A site and with the mRNA backbone. Located at the interface of the 30S and 50S subunits, it traverses the body of the 30S subunit contacting proteins on the other side and probably holding the rRNA structure together. The combined cluster of proteins S8, S12 and S17 appears to hold together the shoulder and platform of the 30S subunit. The sequence is that of Small ribosomal subunit protein uS12 from Psychrobacter arcticus (strain DSM 17307 / VKM B-2377 / 273-4).